The sequence spans 668 residues: DNA ligase (668 aa).

Residues 34–38 (DAEYD), 83–84 (SL), and Glu113 contribute to the NAD(+) site. Lys115 (N6-AMP-lysine intermediate) is an active-site residue. The NAD(+) site is built by Arg136, Glu170, Lys286, and Lys310. Zn(2+) is bound by residues Cys404, Cys407, Cys422, and Cys427. Residues 590–668 (ESDSYFAGKT…EVKMLEELKK (79 aa)) enclose the BRCT domain.

This sequence belongs to the NAD-dependent DNA ligase family. LigA subfamily. Mg(2+) serves as cofactor. Mn(2+) is required as a cofactor.

It catalyses the reaction NAD(+) + (deoxyribonucleotide)n-3'-hydroxyl + 5'-phospho-(deoxyribonucleotide)m = (deoxyribonucleotide)n+m + AMP + beta-nicotinamide D-nucleotide.. DNA ligase that catalyzes the formation of phosphodiester linkages between 5'-phosphoryl and 3'-hydroxyl groups in double-stranded DNA using NAD as a coenzyme and as the energy source for the reaction. It is essential for DNA replication and repair of damaged DNA. This Bacillus pumilus (strain SAFR-032) protein is DNA ligase.